Reading from the N-terminus, the 157-residue chain is Ribosomal RNA large subunit methyltransferase H (157 aa).

Residues Leu73, Gly105, and 124-129 (LSKMTF) contribute to the S-adenosyl-L-methionine site.

This sequence belongs to the RNA methyltransferase RlmH family. In terms of assembly, homodimer.

It is found in the cytoplasm. It carries out the reaction pseudouridine(1915) in 23S rRNA + S-adenosyl-L-methionine = N(3)-methylpseudouridine(1915) in 23S rRNA + S-adenosyl-L-homocysteine + H(+). Its function is as follows. Specifically methylates the pseudouridine at position 1915 (m3Psi1915) in 23S rRNA. The sequence is that of Ribosomal RNA large subunit methyltransferase H from Parabacteroides distasonis (strain ATCC 8503 / DSM 20701 / CIP 104284 / JCM 5825 / NCTC 11152).